The sequence spans 437 residues: Adenylosuccinate synthetase (437 aa).

Residues 12 to 18 (GDEGKGK) and 40 to 42 (GHT) each bind GTP. Residue aspartate 13 is the Proton acceptor of the active site. Mg(2+)-binding residues include aspartate 13 and glycine 40. IMP contacts are provided by residues 13–16 (DEGK), 38–41 (NAGH), threonine 128, arginine 142, glutamine 223, threonine 238, and arginine 302. The active-site Proton donor is the histidine 41. 298–304 (TTTGRKR) is a binding site for substrate. GTP contacts are provided by residues arginine 304, 330-332 (KLD), and 412-414 (SLG).

The protein belongs to the adenylosuccinate synthetase family. In terms of assembly, homodimer. It depends on Mg(2+) as a cofactor.

Its subcellular location is the cytoplasm. It catalyses the reaction IMP + L-aspartate + GTP = N(6)-(1,2-dicarboxyethyl)-AMP + GDP + phosphate + 2 H(+). It participates in purine metabolism; AMP biosynthesis via de novo pathway; AMP from IMP: step 1/2. Plays an important role in the de novo pathway of purine nucleotide biosynthesis. Catalyzes the first committed step in the biosynthesis of AMP from IMP. This is Adenylosuccinate synthetase from Trichodesmium erythraeum (strain IMS101).